Here is a 153-residue protein sequence, read N- to C-terminus: RNA-binding protein 3 (153 aa).

Residues 6-84 enclose the RRM domain; sequence GKLFVGGLNF…RQIRVDHAGK (79 aa). Arg47 is modified (omega-N-methylarginine). Positions 81-153 are disordered; that stretch reads HAGKSARGSR…GGNYRDNYDN (73 aa). The segment covering 89 to 112 has biased composition (gly residues); sequence SRGGAFGGRGRSYSRGGGDQGYGS. Arg103 bears the Asymmetric dimethylarginine; alternate mark. A Dimethylated arginine; alternate modification is found at Arg103. Position 103 is an omega-N-methylarginine; alternate (Arg103). 2 positions are modified to omega-N-methylarginine: Arg118 and Arg128. Ser133 and Ser143 each carry phosphoserine. Residue Tyr151 is modified to Phosphotyrosine.

Interacts with RPL4. Associates with the 60S ribosomal subunits in an RNA-independent manner. Arg-103 is dimethylated, probably to asymmetric dimethylarginine. Post-translationally, phosphorylated.

It localises to the nucleus. The protein resides in the cytoplasm. It is found in the cell projection. Its subcellular location is the dendrite. Functionally, cold-inducible mRNA binding protein that enhances global protein synthesis at both physiological and mild hypothermic temperatures. Reduces the relative abundance of microRNAs, when overexpressed. Enhances phosphorylation of translation initiation factors and active polysome formation. The chain is RNA-binding protein 3 (Rbm3) from Mus musculus (Mouse).